The chain runs to 282 residues: NADPH-dependent 7-cyano-7-deazaguanine reductase (282 aa).

88–90 (IES) is a substrate binding site. 90–91 (SK) provides a ligand contact to NADPH. Cysteine 190 acts as the Thioimide intermediate in catalysis. The Proton donor role is filled by aspartate 197. 229–230 (HE) contacts substrate. 258 to 259 (RG) provides a ligand contact to NADPH.

The protein belongs to the GTP cyclohydrolase I family. QueF type 2 subfamily. As to quaternary structure, homodimer.

The protein localises to the cytoplasm. The enzyme catalyses 7-aminomethyl-7-carbaguanine + 2 NADP(+) = 7-cyano-7-deazaguanine + 2 NADPH + 3 H(+). It functions in the pathway tRNA modification; tRNA-queuosine biosynthesis. Functionally, catalyzes the NADPH-dependent reduction of 7-cyano-7-deazaguanine (preQ0) to 7-aminomethyl-7-deazaguanine (preQ1). The polypeptide is NADPH-dependent 7-cyano-7-deazaguanine reductase (Escherichia coli (strain SMS-3-5 / SECEC)).